We begin with the raw amino-acid sequence, 295 residues long: 33 kDa chaperonin (295 aa).

2 cysteine pairs are disulfide-bonded: Cys-236/Cys-238 and Cys-269/Cys-272.

It belongs to the HSP33 family. Under oxidizing conditions two disulfide bonds are formed involving the reactive cysteines. Under reducing conditions zinc is bound to the reactive cysteines and the protein is inactive.

Its subcellular location is the cytoplasm. In terms of biological role, redox regulated molecular chaperone. Protects both thermally unfolding and oxidatively damaged proteins from irreversible aggregation. Plays an important role in the bacterial defense system toward oxidative stress. The sequence is that of 33 kDa chaperonin from Citrifermentans bemidjiense (strain ATCC BAA-1014 / DSM 16622 / JCM 12645 / Bem) (Geobacter bemidjiensis).